We begin with the raw amino-acid sequence, 272 residues long: NH(3)-dependent NAD(+) synthetase (272 aa).

Glycine 45–serine 52 serves as a coordination point for ATP. Mg(2+) is bound at residue aspartate 51. Residue arginine 138 coordinates deamido-NAD(+). Threonine 158 serves as a coordination point for ATP. Glutamate 163 serves as a coordination point for Mg(2+). 2 residues coordinate deamido-NAD(+): lysine 171 and aspartate 178. Positions 187 and 209 each coordinate ATP. Residue histidine 258–lysine 259 participates in deamido-NAD(+) binding.

Belongs to the NAD synthetase family. In terms of assembly, homodimer.

It catalyses the reaction deamido-NAD(+) + NH4(+) + ATP = AMP + diphosphate + NAD(+) + H(+). Its pathway is cofactor biosynthesis; NAD(+) biosynthesis; NAD(+) from deamido-NAD(+) (ammonia route): step 1/1. In terms of biological role, catalyzes the ATP-dependent amidation of deamido-NAD to form NAD. Uses ammonia as a nitrogen source. This is NH(3)-dependent NAD(+) synthetase from Bacillus licheniformis (strain ATCC 14580 / DSM 13 / JCM 2505 / CCUG 7422 / NBRC 12200 / NCIMB 9375 / NCTC 10341 / NRRL NRS-1264 / Gibson 46).